The chain runs to 187 residues: Ribosome-recycling factor (187 aa).

Belongs to the RRF family.

It is found in the cytoplasm. In terms of biological role, responsible for the release of ribosomes from messenger RNA at the termination of protein biosynthesis. May increase the efficiency of translation by recycling ribosomes from one round of translation to another. This chain is Ribosome-recycling factor, found in Ruegeria sp. (strain TM1040) (Silicibacter sp.).